Here is a 1580-residue protein sequence, read N- to C-terminus: Dynamin-binding protein (1580 aa).

Met-1 bears the N-acetylmethionine mark. 3 SH3 domains span residues Glu-2–Ile-61, Glu-66–Leu-127, and Tyr-146–Pro-205. Disordered regions lie at residues Glu-211–Ser-245, Asn-304–Leu-446, Tyr-500–Asp-546, and Arg-589–Phe-688. Positions Val-229–Gln-243 are enriched in acidic residues. An SH3 4 domain is found at Gln-244–Ser-303. Polar residues-rich tracts occupy residues Gln-422–Pro-439 and Gln-502–Ser-513. Residues Asp-516 to Leu-527 are compositionally biased toward basic and acidic residues. Residues Arg-608–Pro-617 show a composition bias toward pro residues. Over residues Ala-671–Lys-682 the composition is skewed to basic and acidic residues. Ser-683 carries the phosphoserine modification. The stretch at Leu-694–Thr-755 forms a coiled coil. The DH domain maps to Lys-783–Tyr-970. Residues Leu-1011–Leu-1220 form the BAR domain. The 64-residue stretch at Pro-1288–Pro-1351 folds into the SH3 5 domain. Residues Ser-1356 to Ser-1365 are compositionally biased toward low complexity. Disordered regions lie at residues Ser-1356–Ser-1384 and Thr-1426–Glu-1514. Over residues Thr-1426–Pro-1440 the composition is skewed to polar residues. The SH3 6 domain maps to Glu-1516–Tyr-1579.

Binds DNM1 via its N-terminal SH3 domains. The C-terminal SH3 domain binds a complex containing actin, tubulin, Hsp70 and actin-regulatory proteins, such as ENAH, EVL, WIRE, CR16, WAVE1 and NAP1L1. Interacts with FASLG. Interacts (via SH3 domain 6) with WASL. Interacts (via SH3 domain 6) interacts with ENAH. Interacts (via C-terminal domain) with TJP1; required for the apical cell-cell junction localization of DNMBP.

It is found in the cytoplasm. The protein localises to the golgi apparatus. The protein resides in the golgi stack. It localises to the cytoskeleton. Its subcellular location is the synapse. It is found in the cell junction. Its function is as follows. Plays a critical role as a guanine nucleotide exchange factor (GEF) for CDC42 in several intracellular processes associated with the actin and microtubule cytoskeleton. Regulates the structure of apical junctions in epithelial cells. Participates in the normal lumenogenesis of epithelial cell cysts by regulating spindle orientation. Plays a role in ciliogenesis. May play a role in membrane trafficking between the cell surface and the Golgi. In Mus musculus (Mouse), this protein is Dynamin-binding protein.